A 319-amino-acid polypeptide reads, in one-letter code: Putative protein phosphatase 2C 23 (319 aa).

In terms of domain architecture, PPM-type phosphatase spans 73-314 (AVRMESASCY…DDITVVVACI (242 aa)). The Mn(2+) site is built by glycine 102, aspartate 235, and aspartate 305.

It belongs to the PP2C family. Mg(2+) is required as a cofactor.

It carries out the reaction O-phospho-L-seryl-[protein] + H2O = L-seryl-[protein] + phosphate. It catalyses the reaction O-phospho-L-threonyl-[protein] + H2O = L-threonyl-[protein] + phosphate. In Oryza sativa subsp. japonica (Rice), this protein is Putative protein phosphatase 2C 23.